Here is a 136-residue protein sequence, read N- to C-terminus: Large ribosomal subunit protein eL27B (136 aa).

Belongs to the eukaryotic ribosomal protein eL27 family. In terms of assembly, component of the large ribosomal subunit (LSU). Mature yeast ribosomes consist of a small (40S) and a large (60S) subunit. The 40S small subunit contains 1 molecule of ribosomal RNA (18S rRNA) and 33 different proteins (encoded by 57 genes). The large 60S subunit contains 3 rRNA molecules (25S, 5.8S and 5S rRNA) and 46 different proteins (encoded by 81 genes).

The protein localises to the cytoplasm. Its function is as follows. Component of the ribosome, a large ribonucleoprotein complex responsible for the synthesis of proteins in the cell. The small ribosomal subunit (SSU) binds messenger RNAs (mRNAs) and translates the encoded message by selecting cognate aminoacyl-transfer RNA (tRNA) molecules. The large subunit (LSU) contains the ribosomal catalytic site termed the peptidyl transferase center (PTC), which catalyzes the formation of peptide bonds, thereby polymerizing the amino acids delivered by tRNAs into a polypeptide chain. The nascent polypeptides leave the ribosome through a tunnel in the LSU and interact with protein factors that function in enzymatic processing, targeting, and the membrane insertion of nascent chains at the exit of the ribosomal tunnel. The polypeptide is Large ribosomal subunit protein eL27B (Saccharomyces cerevisiae (strain ATCC 204508 / S288c) (Baker's yeast)).